The chain runs to 476 residues: tRNA(Ile)-lysidine synthase (476 aa).

ATP is bound at residue 30–35 (SGGPDS).

This sequence belongs to the tRNA(Ile)-lysidine synthase family.

It is found in the cytoplasm. The catalysed reaction is cytidine(34) in tRNA(Ile2) + L-lysine + ATP = lysidine(34) in tRNA(Ile2) + AMP + diphosphate + H(+). Its function is as follows. Ligates lysine onto the cytidine present at position 34 of the AUA codon-specific tRNA(Ile) that contains the anticodon CAU, in an ATP-dependent manner. Cytidine is converted to lysidine, thus changing the amino acid specificity of the tRNA from methionine to isoleucine. The polypeptide is tRNA(Ile)-lysidine synthase (Bacillus thuringiensis subsp. konkukian (strain 97-27)).